Consider the following 177-residue polypeptide: Secretion monitor (177 aa).

The first 37 residues, 1-37 (MIGILNRWRQFGRRYFWPHLLLGMVAASLGVPLNLSG), serve as a signal peptide directing secretion.

Belongs to the SecM family.

It is found in the cytoplasm. It localises to the cytosol. The protein localises to the periplasm. Regulates secA expression by translational coupling of the secM secA operon. Translational pausing at a specific Pro residue 5 residues before the end of the protein may allow disruption of a mRNA repressor helix that normally suppresses secA translation initiation. This Yersinia pestis bv. Antiqua (strain Antiqua) protein is Secretion monitor.